The chain runs to 492 residues: N-succinylglutamate 5-semialdehyde dehydrogenase (492 aa).

Residue 220-225 (GSANTG) participates in NAD(+) binding. Active-site residues include Glu243 and Cys277.

It belongs to the aldehyde dehydrogenase family. AstD subfamily.

It carries out the reaction N-succinyl-L-glutamate 5-semialdehyde + NAD(+) + H2O = N-succinyl-L-glutamate + NADH + 2 H(+). It functions in the pathway amino-acid degradation; L-arginine degradation via AST pathway; L-glutamate and succinate from L-arginine: step 4/5. Functionally, catalyzes the NAD-dependent reduction of succinylglutamate semialdehyde into succinylglutamate. The polypeptide is N-succinylglutamate 5-semialdehyde dehydrogenase (Shigella flexneri).